A 339-amino-acid chain; its full sequence is Holliday junction branch migration complex subunit RuvB (339 aa).

Residues 2-187 (KDVNEEERII…FGIIEHMQYY (186 aa)) are large ATPase domain (RuvB-L). ATP-binding positions include L26, R27, G68, K71, T72, T73, 134–136 (EDF), R177, Y187, and R224. Position 72 (T72) interacts with Mg(2+). The segment at 188–258 (SVEDLEKIIQ…TTKHSLHLLE (71 aa)) is small ATPAse domain (RuvB-S). The head domain (RuvB-H) stretch occupies residues 261–339 (DEGLDQTDRK…QLGYPPKDEK (79 aa)). Residues R316 and R321 each contribute to the DNA site.

This sequence belongs to the RuvB family. In terms of assembly, homohexamer. Forms an RuvA(8)-RuvB(12)-Holliday junction (HJ) complex. HJ DNA is sandwiched between 2 RuvA tetramers; dsDNA enters through RuvA and exits via RuvB. An RuvB hexamer assembles on each DNA strand where it exits the tetramer. Each RuvB hexamer is contacted by two RuvA subunits (via domain III) on 2 adjacent RuvB subunits; this complex drives branch migration. In the full resolvosome a probable DNA-RuvA(4)-RuvB(12)-RuvC(2) complex forms which resolves the HJ.

The protein resides in the cytoplasm. The catalysed reaction is ATP + H2O = ADP + phosphate + H(+). Functionally, the RuvA-RuvB-RuvC complex processes Holliday junction (HJ) DNA during genetic recombination and DNA repair, while the RuvA-RuvB complex plays an important role in the rescue of blocked DNA replication forks via replication fork reversal (RFR). RuvA specifically binds to HJ cruciform DNA, conferring on it an open structure. The RuvB hexamer acts as an ATP-dependent pump, pulling dsDNA into and through the RuvAB complex. RuvB forms 2 homohexamers on either side of HJ DNA bound by 1 or 2 RuvA tetramers; 4 subunits per hexamer contact DNA at a time. Coordinated motions by a converter formed by DNA-disengaged RuvB subunits stimulates ATP hydrolysis and nucleotide exchange. Immobilization of the converter enables RuvB to convert the ATP-contained energy into a lever motion, pulling 2 nucleotides of DNA out of the RuvA tetramer per ATP hydrolyzed, thus driving DNA branch migration. The RuvB motors rotate together with the DNA substrate, which together with the progressing nucleotide cycle form the mechanistic basis for DNA recombination by continuous HJ branch migration. Branch migration allows RuvC to scan DNA until it finds its consensus sequence, where it cleaves and resolves cruciform DNA. The protein is Holliday junction branch migration complex subunit RuvB of Lactobacillus johnsonii (strain CNCM I-12250 / La1 / NCC 533).